Here is a 351-residue protein sequence, read N- to C-terminus: Transmembrane protein 255A (351 aa).

Helical transmembrane passes span 30–50, 57–77, 89–109, and 226–246; these read IYVT…GLAA, VTVG…LGII, LVAS…CAIV, and TILN…LGGF. The segment at 302–331 is disordered; that stretch reads FPSSPPSGLSDEQEPQSPSPSPSYMWSSSA.

This sequence belongs to the TMEM255 family.

Its subcellular location is the membrane. This chain is Transmembrane protein 255A (Tmem255a), found in Mus musculus (Mouse).